Consider the following 349-residue polypeptide: Ferredoxin--NADP reductase 1 (349 aa).

FAD-binding residues include Glu36, Lys44, Tyr48, Ile88, Leu123, Asp290, and Ser331.

The protein belongs to the ferredoxin--NADP reductase type 2 family. Homodimer. Requires FAD as cofactor.

It catalyses the reaction 2 reduced [2Fe-2S]-[ferredoxin] + NADP(+) + H(+) = 2 oxidized [2Fe-2S]-[ferredoxin] + NADPH. This chain is Ferredoxin--NADP reductase 1, found in Bacillus mycoides (strain KBAB4) (Bacillus weihenstephanensis).